The following is a 174-amino-acid chain: Type II restriction enzyme Bsp6I (174 aa).

It carries out the reaction Endonucleolytic cleavage of DNA to give specific double-stranded fragments with terminal 5'-phosphates.. Its function is as follows. A P subtype restriction enzyme that recognizes the double-stranded sequence 5'-GCNGC-3' and cleaves after C-2. The chain is Type II restriction enzyme Bsp6I from Bacillus sp. (strain RFL6).